Consider the following 127-residue polypeptide: Fluoride-specific ion channel FluC (127 aa).

A run of 4 helical transmembrane segments spans residues leucine 6–phenylalanine 26, threonine 37–alanine 57, leucine 67–valine 87, and leucine 96–leucine 116. 2 residues coordinate Na(+): glycine 75 and threonine 78.

It belongs to the fluoride channel Fluc/FEX (TC 1.A.43) family.

The protein resides in the cell inner membrane. The catalysed reaction is fluoride(in) = fluoride(out). Its activity is regulated as follows. Na(+) is not transported, but it plays an essential structural role and its presence is essential for fluoride channel function. In terms of biological role, fluoride-specific ion channel. Important for reducing fluoride concentration in the cell, thus reducing its toxicity. The sequence is that of Fluoride-specific ion channel FluC from Tolumonas auensis (strain DSM 9187 / NBRC 110442 / TA 4).